A 290-amino-acid chain; its full sequence is Energy-coupling factor transporter ATP-binding protein EcfA2 (290 aa).

The ABC transporter domain maps to 6–246 (EKVEHVYNAR…ADKLAAIGLS (241 aa)). 40 to 47 (GHTGSGKS) serves as a coordination point for ATP.

Belongs to the ABC transporter superfamily. Energy-coupling factor EcfA family. In terms of assembly, forms a stable energy-coupling factor (ECF) transporter complex composed of 2 membrane-embedded substrate-binding proteins (S component), 2 ATP-binding proteins (A component) and 2 transmembrane proteins (T component).

The protein localises to the cell membrane. Functionally, ATP-binding (A) component of a common energy-coupling factor (ECF) ABC-transporter complex. Unlike classic ABC transporters this ECF transporter provides the energy necessary to transport a number of different substrates. The sequence is that of Energy-coupling factor transporter ATP-binding protein EcfA2 from Geobacillus kaustophilus (strain HTA426).